A 212-amino-acid chain; its full sequence is MNSFSTSAFGPVAFSLGLLLVLPAAFPAPVLPGEDSKNVAAPHSQPLTSSERIDKHIRYILDGISALRKETCNRSNMCESSKEALAENNLNLPKMAEKDGCFQSGFNEDTCLVKIITGLLEFEVYLEYLQNRFESSEEQARAVQMSTKVLIQFLQKKAKNLDAITTPEPTTNASLLTKLQAQNQWLQDMTTHLILRSFKEFLQSNLRALRQM.

The N-terminal stretch at 1-27 is a signal peptide; the sequence is MNSFSTSAFGPVAFSLGLLLVLPAAFP. Cys72 and Cys78 are oxidised to a cystine. The N-linked (GlcNAc...) asparagine glycan is linked to Asn73. At Ser81 the chain carries Phosphoserine. A disulfide bridge links Cys101 with Cys111. N-linked (GlcNAc...) asparagine glycosylation occurs at Asn172.

It belongs to the IL-6 superfamily. In terms of assembly, component of a hexamer of two molecules each of IL6, IL6R and IL6ST; first binds to IL6R to associate with the signaling subunit IL6ST. Interacts with IL6R (via the N-terminal ectodomain); this interaction may be affected by IL6R-binding with SORL1, hence decreasing IL6 cis signaling. Interacts with SORL1 (via the N-terminal ectodomain); this interaction leads to IL6 internalization and lysosomal degradation. May form a trimeric complex with the soluble SORL1 ectodomain and soluble IL6R receptor; this interaction might stabilize circulating IL6, hence promoting IL6 trans signaling.

The protein localises to the secreted. Its function is as follows. Cytokine with a wide variety of biological functions in immunity, tissue regeneration, and metabolism. Binds to IL6R, then the complex associates to the signaling subunit IL6ST/gp130 to trigger the intracellular IL6-signaling pathway. The interaction with the membrane-bound IL6R and IL6ST stimulates 'classic signaling', whereas the binding of IL6 and soluble IL6R to IL6ST stimulates 'trans-signaling'. Alternatively, 'cluster signaling' occurs when membrane-bound IL6:IL6R complexes on transmitter cells activate IL6ST receptors on neighboring receiver cells. In terms of biological role, IL6 is a potent inducer of the acute phase response. Rapid production of IL6 contributes to host defense during infection and tissue injury, but excessive IL6 synthesis is involved in disease pathology. In the innate immune response, is synthesized by myeloid cells, such as macrophages and dendritic cells, upon recognition of pathogens through toll-like receptors (TLRs) at the site of infection or tissue injury. In the adaptive immune response, is required for the differentiation of B cells into immunoglobulin-secreting cells. Plays a major role in the differentiation of CD4(+) T cell subsets. Essential factor for the development of T follicular helper (Tfh) cells that are required for the induction of germinal-center formation. Required to drive naive CD4(+) T cells to the Th17 lineage. Also required for proliferation of myeloma cells and the survival of plasmablast cells. Acts as an essential factor in bone homeostasis and on vessels directly or indirectly by induction of VEGF, resulting in increased angiogenesis activity and vascular permeability. Induces, through 'trans-signaling' and synergistically with IL1B and TNF, the production of VEGF. Involved in metabolic controls, is discharged into the bloodstream after muscle contraction increasing lipolysis and improving insulin resistance. 'Trans-signaling' in central nervous system also regulates energy and glucose homeostasis. Mediates, through GLP-1, crosstalk between insulin-sensitive tissues, intestinal L cells and pancreatic islets to adapt to changes in insulin demand. Also acts as a myokine. Plays a protective role during liver injury, being required for maintenance of tissue regeneration. Also has a pivotal role in iron metabolism by regulating HAMP/hepcidin expression upon inflammation or bacterial infection. Through activation of IL6ST-YAP-NOTCH pathway, induces inflammation-induced epithelial regeneration. The chain is Interleukin-6 (IL6) from Macaca mulatta (Rhesus macaque).